The chain runs to 494 residues: Neuronal pentraxin receptor (494 aa).

Topologically, residues 1–2 (MK) are cytoplasmic. A helical; Signal-anchor for type II membrane protein membrane pass occupies residues 3 to 23 (FLAVLLAAGMLAFLGAVICII). The Extracellular segment spans residues 24–494 (ASVPLAASPA…FDVCKRRAKA (471 aa)). The tract at residues 37-80 (PGGTDNASAASAAGAPGPQRSLSALQGAGGSAGPSVLPGEPAAS) is disordered. Asn42 is a glycosylation site (N-linked (GlcNAc...) asparagine). Composition is skewed to low complexity over residues 43 to 62 (ASAASAAGAPGPQRSLSALQ) and 69 to 80 (GPSVLPGEPAAS). N-linked (GlcNAc...) asparagine glycosylation is present at Asn211. The Pentraxin (PTX) domain maps to 286–488 (DAFKVSIPIR…GAKKAAFDVC (203 aa)). A disulfide bond links Cys316 and Cys377. Residues Asn341, Glu419, Gln420, Asp421, and Gln431 each contribute to the Ca(2+) site. An N-linked (GlcNAc...) asparagine glycan is attached at Asn457.

As to quaternary structure, interacts with KLHL2. Heteropentamer with NPTX1 and/or NPTX2. Also binds taipoxin-associated calcium-binding protein 49 (TCBP49/RCN2). Ca(2+) is required as a cofactor. N-glycosylated. In terms of processing, ubiquitinated by a cullin-RING-based BCR (BTB-CUL3-RBX1) E3 ubiquitin-protein ligase complex containing KLHL2. Brain specific.

Its subcellular location is the membrane. In terms of biological role, may be involved in mediating uptake of synaptic material during synapse remodeling or in mediating the synaptic clustering of AMPA glutamate receptors at a subset of excitatory synapses. In Rattus norvegicus (Rat), this protein is Neuronal pentraxin receptor (Nptxr).